Here is a 131-residue protein sequence, read N- to C-terminus: Fluoride-specific ion channel FluC (131 aa).

Transmembrane regions (helical) follow at residues 4–24 (LWIM…TGFV), 30–50 (GIFP…IGFF), 68–88 (LFVM…SLQT), and 104–124 (IALS…VAVA). Gly76 and Thr79 together coordinate Na(+).

Belongs to the fluoride channel Fluc/FEX (TC 1.A.43) family.

The protein localises to the cell inner membrane. The catalysed reaction is fluoride(in) = fluoride(out). Its activity is regulated as follows. Na(+) is not transported, but it plays an essential structural role and its presence is essential for fluoride channel function. Its function is as follows. Fluoride-specific ion channel. Important for reducing fluoride concentration in the cell, thus reducing its toxicity. The sequence is that of Fluoride-specific ion channel FluC from Methylocella silvestris (strain DSM 15510 / CIP 108128 / LMG 27833 / NCIMB 13906 / BL2).